The sequence spans 122 residues: Large ribosomal subunit protein uL14 (122 aa).

Belongs to the universal ribosomal protein uL14 family. As to quaternary structure, part of the 50S ribosomal subunit. Forms a cluster with proteins L3 and L19. In the 70S ribosome, L14 and L19 interact and together make contacts with the 16S rRNA in bridges B5 and B8.

In terms of biological role, binds to 23S rRNA. Forms part of two intersubunit bridges in the 70S ribosome. The sequence is that of Large ribosomal subunit protein uL14 from Chlorobium phaeobacteroides (strain BS1).